Reading from the N-terminus, the 244-residue chain is Exosome complex component Rrp41 (244 aa).

Belongs to the RNase PH family. Rrp41 subfamily. In terms of assembly, component of the archaeal exosome complex. Forms a hexameric ring-like arrangement composed of 3 Rrp41-Rrp42 heterodimers. The hexameric ring associates with a trimer of Rrp4 and/or Csl4 subunits.

It is found in the cytoplasm. Its function is as follows. Catalytic component of the exosome, which is a complex involved in RNA degradation. Has 3'-&gt;5' exoribonuclease activity. Can also synthesize heteromeric RNA-tails. The sequence is that of Exosome complex component Rrp41 from Nitrosopumilus maritimus (strain SCM1).